The sequence spans 243 residues: Segregation and condensation protein A (243 aa).

The protein belongs to the ScpA family. Component of a cohesin-like complex composed of ScpA, ScpB and the Smc homodimer, in which ScpA and ScpB bind to the head domain of Smc. The presence of the three proteins is required for the association of the complex with DNA.

It is found in the cytoplasm. Functionally, participates in chromosomal partition during cell division. May act via the formation of a condensin-like complex containing Smc and ScpB that pull DNA away from mid-cell into both cell halves. This Staphylococcus haemolyticus (strain JCSC1435) protein is Segregation and condensation protein A.